Here is a 361-residue protein sequence, read N- to C-terminus: POU domain, class 3, transcription factor 4 (361 aa).

2 disordered regions span residues 99-131 (PHVAHHSPHTNHPNAWGASPAPNSSITSSGQPL) and 144-192 (MLEH…PTSD). The span at 119 to 131 (APNSSITSSGQPL) shows a compositional bias: polar residues. Positions 165-183 (VLREPPDHGELGSHHCQDH) are enriched in basic and acidic residues. The region spanning 186–260 (EETPTSDELE…LLNKWLEEAD (75 aa)) is the POU-specific domain. At Ser265 the chain carries Phosphoserine. The homeobox DNA-binding region spans 278–337 (KRKKRTSIEVSVKGVLETHFLKCPKPAAQEISSLADSLQLEKEVVRVWFCNRRQKEKRMT). Residues 334–361 (KRMTPPGDQQPHEVYSHTVKTDASCHDL) are disordered. A compositionally biased stretch (basic and acidic residues) spans 343 to 361 (QPHEVYSHTVKTDASCHDL).

Belongs to the POU transcription factor family. Class-3 subfamily. Interacts with HNRNPU. Brain specific.

It localises to the nucleus. Functionally, probable transcription factor which exert its primary action widely during early neural development and in a very limited set of neurons in the mature brain. The chain is POU domain, class 3, transcription factor 4 (Pou3f4) from Mus musculus (Mouse).